We begin with the raw amino-acid sequence, 1094 residues long: Probable arabinosyltransferase C (1094 aa).

13 consecutive transmembrane segments (helical) span residues 28–50 (IARYVAVVAGLLGAVLAIATPLL), 232–251 (AAMILGVALTGAALVALHIL), 264–286 (PARWWSTGGLDTLVIAVLVWWHF), 341–360 (SIWMRLPTLAMALTCWWVIS), 373–392 (TSRAAAWTAAGMFLAVWLPL), 431–453 (IGALTLFSGPTGIASIGALLVAI), 466–488 (RFGVLPLVAPILAAATVTAIPIF), 530–552 (SIARRFAVLALVLALAVSVAMSL), 565–582 (SRRIIGITIISFLAMMFT), 586–608 (WTHHFGVFAGLAGSLGALAAVAV), 620–642 (TVFAAVVVFVLALSFASVNGWWY), 657–679 (WRWSLTTALLELTVLVLLLAAWF), and 700–722 (LAGIVQSPLAIATWLLVLFEVVS). Over residues 817–831 (GSEPGTEGGTTAAPG) the composition is skewed to low complexity. Residues 817–836 (GSEPGTEGGTTAAPGINGSR) form a disordered region.

The protein belongs to the emb family.

The protein localises to the cell membrane. Functionally, arabinosyl transferase responsible for the polymerization of arabinose into the arabinan of arabinogalactan. This chain is Probable arabinosyltransferase C (embC), found in Mycobacterium tuberculosis (strain CDC 1551 / Oshkosh).